A 705-amino-acid polypeptide reads, in one-letter code: Polyphosphate kinase (705 aa).

Asparagine 58 lines the ATP pocket. Arginine 389 and arginine 419 together coordinate Mg(2+). Histidine 449 serves as the catalytic Phosphohistidine intermediate. ATP-binding residues include tyrosine 482, arginine 578, and histidine 606.

This sequence belongs to the polyphosphate kinase 1 (PPK1) family. The cofactor is Mg(2+). An intermediate of this reaction is the autophosphorylated ppk in which a phosphate is covalently linked to a histidine residue through a N-P bond.

The catalysed reaction is [phosphate](n) + ATP = [phosphate](n+1) + ADP. Functionally, catalyzes the reversible transfer of the terminal phosphate of ATP to form a long-chain polyphosphate (polyP). The sequence is that of Polyphosphate kinase from Halalkalibacterium halodurans (strain ATCC BAA-125 / DSM 18197 / FERM 7344 / JCM 9153 / C-125) (Bacillus halodurans).